The primary structure comprises 65 residues: Beta-mammal toxin Tma1 (65 aa).

Residues 2-64 enclose the LCN-type CS-alpha/beta domain; it reads KEGYLVGNDG…TWNSAKNRCG (63 aa). 4 cysteine pairs are disulfide-bonded: C12–C63, C16–C38, C24–C44, and C28–C46.

It belongs to the long (4 C-C) scorpion toxin superfamily. Sodium channel inhibitor family. As to expression, expressed by the venom gland.

Its subcellular location is the secreted. Its function is as follows. Beta toxins bind voltage-independently at site-4 of sodium channels (Nav) and shift the voltage of activation toward more negative potentials thereby affecting sodium channel activation and promoting spontaneous and repetitive firing. This toxin acts on human Nav1.4/SCN4A and Nav1.6/SCN8A voltage-gated sodium channels. The protein is Beta-mammal toxin Tma1 of Tityus macrochirus (Scorpion).